A 1612-amino-acid chain; its full sequence is Roundabout homolog 1 (1612 aa).

The N-terminal stretch at 1-19 (MIAEPAHFYLFGLICLCSG) is a signal peptide. The Extracellular portion of the chain corresponds to 20–858 (SRLRQEDFPP…QQISDVVRQP (839 aa)). Ig-like C2-type domains follow at residues 29–125 (PRIV…ASLE), 131–218 (DDFR…AELT), 223–307 (PSFV…ATLT), 312–407 (PHFV…LEVT), and 416–502 (PVIR…AYIE). An intrachain disulfide couples C50 to C108. N-linked (GlcNAc...) asparagine glycosylation is present at N121. 3 disulfide bridges follow: C152–C201, C244–C291, and C333–C389. An N-linked (GlcNAc...) asparagine glycan is attached at N424. Cysteines 437 and 486 form a disulfide. 3 consecutive Fibronectin type-III domains span residues 524 to 618 (APSK…TQDV), 637 to 734 (VVLH…TLEE), and 739 to 835 (PPRS…LDSH). N-linked (GlcNAc...) asparagine glycosylation is found at N751, N781, and N788. Residues 859-879 (AFIAGIGAACWIILMVFSIWL) form a helical membrane-spanning segment. The Cytoplasmic portion of the chain corresponds to 880–1612 (YRHRKKRNGL…NNEELEETES (733 aa)). A Phosphoserine modification is found at S901. T909 is modified (phosphothreonine). At Y999 the chain carries Phosphotyrosine. S1016 carries the post-translational modification Phosphoserine. The residue at position 1034 (Y1034) is a Phosphotyrosine. A disordered region spans residues 1045 to 1068 (SNNMNNGAGDSSEKHWKPPGQQKP). Phosphotyrosine is present on Y1075. 3 disordered regions span residues 1088 to 1298 (RAND…ADME), 1313 to 1358 (EQTP…DGSF), and 1381 to 1612 (RRQM…ETES). The span at 1098–1107 (PYNQSYDQNT) shows a compositional bias: polar residues. Low complexity predominate over residues 1108-1124 (GGSYNSSDRGSSTSGSQ). The span at 1147–1157 (LPPPPAHPPPH) shows a compositional bias: pro residues. A Phosphothreonine modification is found at T1201. The span at 1216-1230 (YSHQSTATLTPSPQE) shows a compositional bias: polar residues. Basic and acidic residues predominate over residues 1242 to 1254 (DLGHMPHPPDRRR). The segment covering 1257–1268 (VSPPPPPRPISP) has biased composition (pro residues). S1258 is modified (phosphoserine). Residues 1283–1297 (MDTDAPEEEEDEADM) are compositionally biased toward acidic residues. The segment covering 1345–1358 (SSGRSSVSSSDGSF) has biased composition (low complexity). Residues 1399 to 1412 (PRPTSPVSTDSNMS) are compositionally biased toward polar residues. Positions 1420–1431 (RPAKKQKHQPGH) are enriched in basic residues. The segment covering 1441–1451 (LPPPPVPPPAI) has biased composition (pro residues). 2 stretches are compositionally biased toward basic and acidic residues: residues 1477–1502 (ARTDRSSDRKGGSYKGREALDGRQVT) and 1510–1534 (DPREAQEQPNDGKGRGTRQPKRDLP). The segment covering 1553-1562 (FPTSNNPRDP) has biased composition (polar residues). Positions 1563–1575 (SSSSSMSSRGSGS) are enriched in low complexity. Over residues 1603 to 1612 (NNEELEETES) the composition is skewed to acidic residues.

The protein belongs to the immunoglobulin superfamily. ROBO family. Homodimer. Dimerization is mediated by the extracellular domain and is independent of SLIT liganding. Interacts with SLIT1 Interacts with SLIT2. Interacts with FLRT3. Interacts with MYO9B (via Rho-GAP domain). In terms of processing, ubiquitinated. May be deubiquitinated by USP33. In terms of tissue distribution, detected in embryonic thalamus neurons (at protein level). Expressed in embryonal spinal cord. Expressed in embryonal lung, and in adult lung bronchial epithelial cells of large proximal airways.

Its subcellular location is the cell membrane. It is found in the cell projection. It localises to the axon. The protein resides in the endoplasmic reticulum-Golgi intermediate compartment membrane. In terms of biological role, receptor for SLIT1 and SLIT2 that mediates cellular responses to molecular guidance cues in cellular migration, including axonal navigation at the ventral midline of the neural tube and projection of axons to different regions during neuronal development. Interaction with the intracellular domain of FLRT3 mediates axon attraction towards cells expressing NTN1. In axon growth cones, the silencing of the attractive effect of NTN1 by SLIT2 may require the formation of a ROBO1-DCC complex. Plays a role in the regulation of cell migration via its interaction with MYO9B; inhibits MYO9B-mediated stimulation of RHOA GTPase activity, and thereby leads to increased levels of active, GTP-bound RHOA. May be required for lung development. In Mus musculus (Mouse), this protein is Roundabout homolog 1 (Robo1).